We begin with the raw amino-acid sequence, 127 residues long: Small ribosomal subunit protein uS13 (127 aa).

Residues 90–127 are disordered; that stretch reads KRHREGLPVNGQRTRTNARTRKGKRKTVAGRSQSTQKK. Basic residues predominate over residues 105 to 117; the sequence is TNARTRKGKRKTV.

It belongs to the universal ribosomal protein uS13 family. Part of the 30S ribosomal subunit. Forms a loose heterodimer with protein S19. Forms two bridges to the 50S subunit in the 70S ribosome.

Functionally, located at the top of the head of the 30S subunit, it contacts several helices of the 16S rRNA. In the 70S ribosome it contacts the 23S rRNA (bridge B1a) and protein L5 of the 50S subunit (bridge B1b), connecting the 2 subunits; these bridges are implicated in subunit movement. Contacts the tRNAs in the A and P-sites. The protein is Small ribosomal subunit protein uS13 of Salinibacter ruber (strain DSM 13855 / M31).